The chain runs to 339 residues: tRNA N6-adenosine threonylcarbamoyltransferase (339 aa).

Residues histidine 111 and histidine 115 each contribute to the Fe cation site. Residues 134 to 138 (LVSGG), aspartate 167, glycine 180, and asparagine 272 contribute to the substrate site. Aspartate 300 serves as a coordination point for Fe cation.

The protein belongs to the KAE1 / TsaD family. It depends on Fe(2+) as a cofactor.

The protein resides in the cytoplasm. It catalyses the reaction L-threonylcarbamoyladenylate + adenosine(37) in tRNA = N(6)-L-threonylcarbamoyladenosine(37) in tRNA + AMP + H(+). Its function is as follows. Required for the formation of a threonylcarbamoyl group on adenosine at position 37 (t(6)A37) in tRNAs that read codons beginning with adenine. Is involved in the transfer of the threonylcarbamoyl moiety of threonylcarbamoyl-AMP (TC-AMP) to the N6 group of A37, together with TsaE and TsaB. TsaD likely plays a direct catalytic role in this reaction. In Vibrio vulnificus (strain YJ016), this protein is tRNA N6-adenosine threonylcarbamoyltransferase.